A 277-amino-acid chain; its full sequence is MKIQLASSYGFCFGVKRAIKIAEEHQGSKTYGPLIHNKDEINRLKEGFDIGLAEKLDDVTPEDSVVIRTHGIPKDELSQLKAQENPIIDATCPYVTTPQNIVANMSEKGYSIVIFGDKEHPEIKGVVSYAKDLRNAFIVKHEDELKGLPILSKVAVVAQTTRKPEDFLKIVNALILNHKEVRVFNTICNATFENQDAAAELAKDADVMVVIGGKHSSNTKQLHSICKSYCDDSYLIENEAELEPKWFEGKKLCGISAGASTPDWIVQNVIDKIEALK.

Cys-12 lines the [4Fe-4S] cluster pocket. (2E)-4-hydroxy-3-methylbut-2-enyl diphosphate contacts are provided by His-36 and His-70. Dimethylallyl diphosphate is bound by residues His-36 and His-70. Positions 36 and 70 each coordinate isopentenyl diphosphate. A [4Fe-4S] cluster-binding site is contributed by Cys-92. His-120 is a binding site for (2E)-4-hydroxy-3-methylbut-2-enyl diphosphate. Residue His-120 coordinates dimethylallyl diphosphate. His-120 contacts isopentenyl diphosphate. Catalysis depends on Glu-122, which acts as the Proton donor. Residue Thr-160 coordinates (2E)-4-hydroxy-3-methylbut-2-enyl diphosphate. Cys-188 lines the [4Fe-4S] cluster pocket. (2E)-4-hydroxy-3-methylbut-2-enyl diphosphate contacts are provided by Ser-216, Ser-217, Asn-218, and Ser-260. Positions 216, 217, 218, and 260 each coordinate dimethylallyl diphosphate. Isopentenyl diphosphate contacts are provided by Ser-216, Ser-217, Asn-218, and Ser-260.

This sequence belongs to the IspH family. [4Fe-4S] cluster serves as cofactor.

The enzyme catalyses isopentenyl diphosphate + 2 oxidized [2Fe-2S]-[ferredoxin] + H2O = (2E)-4-hydroxy-3-methylbut-2-enyl diphosphate + 2 reduced [2Fe-2S]-[ferredoxin] + 2 H(+). It catalyses the reaction dimethylallyl diphosphate + 2 oxidized [2Fe-2S]-[ferredoxin] + H2O = (2E)-4-hydroxy-3-methylbut-2-enyl diphosphate + 2 reduced [2Fe-2S]-[ferredoxin] + 2 H(+). It participates in isoprenoid biosynthesis; dimethylallyl diphosphate biosynthesis; dimethylallyl diphosphate from (2E)-4-hydroxy-3-methylbutenyl diphosphate: step 1/1. Its pathway is isoprenoid biosynthesis; isopentenyl diphosphate biosynthesis via DXP pathway; isopentenyl diphosphate from 1-deoxy-D-xylulose 5-phosphate: step 6/6. Catalyzes the conversion of 1-hydroxy-2-methyl-2-(E)-butenyl 4-diphosphate (HMBPP) into a mixture of isopentenyl diphosphate (IPP) and dimethylallyl diphosphate (DMAPP). Acts in the terminal step of the DOXP/MEP pathway for isoprenoid precursor biosynthesis. This chain is 4-hydroxy-3-methylbut-2-enyl diphosphate reductase, found in Sulfurovum sp. (strain NBC37-1).